The primary structure comprises 394 residues: 3-phenylpropionate/cinnamic acid dioxygenase ferredoxin--NAD(+) reductase component (394 aa).

5 to 36 (TFIIVGAGQAGAMAAATLRQQQFDGDIILIGK) lines the FAD pocket. 146–174 (RILIVGGGVIGLELAATSCELGANVTVIE) serves as a coordination point for NAD(+).

Belongs to the bacterial ring-hydroxylating dioxygenase ferredoxin reductase family. In terms of assembly, this dioxygenase system consists of four proteins: the two subunits of the hydroxylase component (HcaE and HcaF), a ferredoxin (HcaC) and a ferredoxin reductase (HcaD). It depends on FAD as a cofactor.

It catalyses the reaction 2 reduced [2Fe-2S]-[ferredoxin] + NAD(+) + H(+) = 2 oxidized [2Fe-2S]-[ferredoxin] + NADH. It functions in the pathway aromatic compound metabolism; 3-phenylpropanoate degradation. Part of the multicomponent 3-phenylpropionate dioxygenase, that converts 3-phenylpropionic acid (PP) and cinnamic acid (CI) into 3-phenylpropionate-dihydrodiol (PP-dihydrodiol) and cinnamic acid-dihydrodiol (CI-dihydrodiol), respectively. This Photorhabdus laumondii subsp. laumondii (strain DSM 15139 / CIP 105565 / TT01) (Photorhabdus luminescens subsp. laumondii) protein is 3-phenylpropionate/cinnamic acid dioxygenase ferredoxin--NAD(+) reductase component.